A 558-amino-acid chain; its full sequence is Formate--tetrahydrofolate ligase (558 aa).

65-72 (TPAGEGKT) provides a ligand contact to ATP.

Belongs to the formate--tetrahydrofolate ligase family.

It carries out the reaction (6S)-5,6,7,8-tetrahydrofolate + formate + ATP = (6R)-10-formyltetrahydrofolate + ADP + phosphate. It functions in the pathway one-carbon metabolism; tetrahydrofolate interconversion. This chain is Formate--tetrahydrofolate ligase, found in Methylobacterium nodulans (strain LMG 21967 / CNCM I-2342 / ORS 2060).